A 175-amino-acid chain; its full sequence is Hypoxanthine-guanine phosphoribosyltransferase (175 aa).

Diphosphate-binding residues include K40 and G41. Mg(2+) contacts are provided by E96 and D97. Residue D100 is the Proton acceptor of the active site. GMP is bound by residues K128, 149–150 (FL), and D156. R162 provides a ligand contact to diphosphate.

This sequence belongs to the purine/pyrimidine phosphoribosyltransferase family. The cofactor is Mg(2+).

The protein localises to the cytoplasm. The catalysed reaction is IMP + diphosphate = hypoxanthine + 5-phospho-alpha-D-ribose 1-diphosphate. It carries out the reaction GMP + diphosphate = guanine + 5-phospho-alpha-D-ribose 1-diphosphate. It participates in purine metabolism; IMP biosynthesis via salvage pathway; IMP from hypoxanthine: step 1/1. It functions in the pathway purine metabolism; GMP biosynthesis via salvage pathway; GMP from guanine: step 1/1. Purine salvage pathway enzyme that catalyzes the transfer of the ribosyl-5-phosphate group from 5-phospho-alpha-D-ribose 1-diphosphate (PRPP) to the N9 position of the 6-oxopurines hypoxanthine and guanine to form the corresponding ribonucleotides IMP (inosine 5'-monophosphate) and GMP (guanosine 5'-monophosphate), with the release of PPi. This is Hypoxanthine-guanine phosphoribosyltransferase (hpt) from Mycoplasma genitalium (strain ATCC 33530 / DSM 19775 / NCTC 10195 / G37) (Mycoplasmoides genitalium).